The following is a 307-amino-acid chain: Acetyl-coenzyme A carboxylase carboxyl transferase subunit beta (307 aa).

Residues 1 to 26 form a disordered region; sequence MAMAEPQDPKKGDKKTAERRGGGWLS. Residues 7 to 21 are compositionally biased toward basic and acidic residues; it reads QDPKKGDKKTAERRG. Positions 45 to 307 constitute a CoA carboxyltransferase N-terminal domain; sequence LWVKCPDTGE…LMMGRKRQAA (263 aa).

It belongs to the AccD/PCCB family. Acetyl-CoA carboxylase is a heterohexamer composed of biotin carboxyl carrier protein (AccB), biotin carboxylase (AccC) and two subunits each of ACCase subunit alpha (AccA) and ACCase subunit beta (AccD).

The protein localises to the cytoplasm. The enzyme catalyses N(6)-carboxybiotinyl-L-lysyl-[protein] + acetyl-CoA = N(6)-biotinyl-L-lysyl-[protein] + malonyl-CoA. Its pathway is lipid metabolism; malonyl-CoA biosynthesis; malonyl-CoA from acetyl-CoA: step 1/1. Component of the acetyl coenzyme A carboxylase (ACC) complex. Biotin carboxylase (BC) catalyzes the carboxylation of biotin on its carrier protein (BCCP) and then the CO(2) group is transferred by the transcarboxylase to acetyl-CoA to form malonyl-CoA. The protein is Acetyl-coenzyme A carboxylase carboxyl transferase subunit beta of Caulobacter vibrioides (strain ATCC 19089 / CIP 103742 / CB 15) (Caulobacter crescentus).